The following is a 330-amino-acid chain: Peroxisomal membrane protein PEX13 (330 aa).

A compositionally biased stretch (pro residues) spans 1–14 (MSAPPTNQPPPLPP). Positions 1–20 (MSAPPTNQPPPLPPRSFDNQ) are disordered. Residues 193–213 (ASVNWPAALFWVVAIGGPWLI) form a helical membrane-spanning segment. An SH3 domain is found at 235–300 (APHYTAQALF…PINYVRIVGK (66 aa)).

This sequence belongs to the peroxin-13 family. Interacts with PEX14/prx-14; forming the PEX13-PEX14 docking complex.

The protein resides in the peroxisome membrane. Functionally, component of the PEX13-PEX14 docking complex, a translocon channel that specifically mediates the import of peroxisomal cargo proteins bound to PEX5/prx-5 receptor. The PEX13-PEX14 docking complex forms a large import pore which can be opened to a diameter of about 9 nm. Mechanistically, PEX5/prx-5 receptor along with cargo proteins associates with the PEX14/prx-14 subunit of the PEX13-PEX14 docking complex in the cytosol, leading to the insertion of the receptor into the organelle membrane with the concomitant translocation of the cargo into the peroxisome matrix. The sequence is that of Peroxisomal membrane protein PEX13 (prx-13) from Caenorhabditis elegans.